The chain runs to 20 residues: Antiviral protein Y3 (20 aa).

This is Antiviral protein Y3 from Pleurotus citrinopileatus (Golden oyster mushroom).